Here is an 887-residue protein sequence, read N- to C-terminus: Alanine--tRNA ligase (887 aa).

Zn(2+)-binding residues include H563, H567, C677, and H681.

Belongs to the class-II aminoacyl-tRNA synthetase family. Zn(2+) is required as a cofactor.

The protein localises to the cytoplasm. The enzyme catalyses tRNA(Ala) + L-alanine + ATP = L-alanyl-tRNA(Ala) + AMP + diphosphate. Its function is as follows. Catalyzes the attachment of alanine to tRNA(Ala) in a two-step reaction: alanine is first activated by ATP to form Ala-AMP and then transferred to the acceptor end of tRNA(Ala). Also edits incorrectly charged Ser-tRNA(Ala) and Gly-tRNA(Ala) via its editing domain. This Dinoroseobacter shibae (strain DSM 16493 / NCIMB 14021 / DFL 12) protein is Alanine--tRNA ligase.